A 357-amino-acid chain; its full sequence is Cinnamyl alcohol dehydrogenase 5 (357 aa).

Zn(2+) is bound at residue C47. T49 contributes to the NADP(+) binding site. Positions 69, 70, 100, 103, 106, 114, and 163 each coordinate Zn(2+). NADP(+) is bound by residues T167, 188-193 (GLGGVG), 211-216 (SSSNKK), T251, G275, and 298-300 (SFI).

It belongs to the zinc-containing alcohol dehydrogenase family. In terms of assembly, homodimer. The cofactor is Zn(2+). In terms of tissue distribution, expressed at the lateral root initiation sites, in the vascular tissues of the primary lateral root and the root caps. Expressed in the hypocotyl, cotyledon and leaf veins, apical meristem region, at the base of the trichomes, hydathodes and cauline leaves. In stems, expressed in the cells associated with the vascular cambium, interfascicular cambium and the developing xylem. Expressed in the vascular strand of petals and sepals, anthers, stamen filaments, stigma in flowers, and abscission, style and stigmatic regions of siliques.

The enzyme catalyses (E)-cinnamyl alcohol + NADP(+) = (E)-cinnamaldehyde + NADPH + H(+). It carries out the reaction (E)-coniferol + NADP(+) = (E)-coniferaldehyde + NADPH + H(+). The catalysed reaction is (E)-sinapyl alcohol + NADP(+) = (E)-sinapaldehyde + NADPH + H(+). It catalyses the reaction (E)-4-coumaroyl alcohol + NADP(+) = (E)-4-coumaraldehyde + NADPH + H(+). The enzyme catalyses (E)-caffeyl alcohol + NADP(+) = (E)-caffeyl aldehyde + NADPH + H(+). It participates in aromatic compound metabolism; phenylpropanoid biosynthesis. Involved in lignin biosynthesis in the floral stem. Catalyzes the final step specific for the production of lignin monomers. Catalyzes the NADPH-dependent reduction of coniferaldehyde, 5-hydroxyconiferaldehyde, sinapaldehyde, 4-coumaraldehyde and caffeyl aldehyde to their respective alcohols. The chain is Cinnamyl alcohol dehydrogenase 5 from Arabidopsis thaliana (Mouse-ear cress).